The chain runs to 155 residues: uncharacterized protein (155 aa).

Residues 4 to 65 (IDEIDEVIVR…VVDPSFFGEF (62 aa)) form the HTH asnC-type domain. The segment at residues 23–42 (LTELGRKVGLTASAVKNRIE) is a DNA-binding region (H-T-H motif).

This is an uncharacterized protein from Pyrococcus horikoshii (strain ATCC 700860 / DSM 12428 / JCM 9974 / NBRC 100139 / OT-3).